The primary structure comprises 227 residues: Cytochrome c oxidase subunit 2 (227 aa).

Residues 1–14 (MAHAAQVGLQDATS) are Mitochondrial intermembrane-facing. A helical transmembrane segment spans residues 15-45 (PIMEELIIFHDHALMIIFLICFLVLYALFLT). Topologically, residues 46–59 (LTTKLTNTSISDAQ) are mitochondrial matrix. Residues 60–87 (EMETVWTILPAIILVLIALPSLRILYMT) traverse the membrane as a helical segment. Residues 88-227 (DEVNDPSFTI…IFEMGPVFTL (140 aa)) lie on the Mitochondrial intermembrane side of the membrane. Residues histidine 161, cysteine 196, glutamate 198, cysteine 200, histidine 204, and methionine 207 each coordinate Cu cation. Residue glutamate 198 participates in Mg(2+) binding.

This sequence belongs to the cytochrome c oxidase subunit 2 family. As to quaternary structure, component of the cytochrome c oxidase (complex IV, CIV), a multisubunit enzyme composed of 14 subunits. The complex is composed of a catalytic core of 3 subunits MT-CO1, MT-CO2 and MT-CO3, encoded in the mitochondrial DNA, and 11 supernumerary subunits COX4I, COX5A, COX5B, COX6A, COX6B, COX6C, COX7A, COX7B, COX7C, COX8 and NDUFA4, which are encoded in the nuclear genome. The complex exists as a monomer or a dimer and forms supercomplexes (SCs) in the inner mitochondrial membrane with NADH-ubiquinone oxidoreductase (complex I, CI) and ubiquinol-cytochrome c oxidoreductase (cytochrome b-c1 complex, complex III, CIII), resulting in different assemblies (supercomplex SCI(1)III(2)IV(1) and megacomplex MCI(2)III(2)IV(2)). Found in a complex with TMEM177, COA6, COX18, COX20, SCO1 and SCO2. Interacts with TMEM177 in a COX20-dependent manner. Interacts with COX20. Interacts with COX16. Requires Cu cation as cofactor.

The protein localises to the mitochondrion inner membrane. It carries out the reaction 4 Fe(II)-[cytochrome c] + O2 + 8 H(+)(in) = 4 Fe(III)-[cytochrome c] + 2 H2O + 4 H(+)(out). Component of the cytochrome c oxidase, the last enzyme in the mitochondrial electron transport chain which drives oxidative phosphorylation. The respiratory chain contains 3 multisubunit complexes succinate dehydrogenase (complex II, CII), ubiquinol-cytochrome c oxidoreductase (cytochrome b-c1 complex, complex III, CIII) and cytochrome c oxidase (complex IV, CIV), that cooperate to transfer electrons derived from NADH and succinate to molecular oxygen, creating an electrochemical gradient over the inner membrane that drives transmembrane transport and the ATP synthase. Cytochrome c oxidase is the component of the respiratory chain that catalyzes the reduction of oxygen to water. Electrons originating from reduced cytochrome c in the intermembrane space (IMS) are transferred via the dinuclear copper A center (CU(A)) of subunit 2 and heme A of subunit 1 to the active site in subunit 1, a binuclear center (BNC) formed by heme A3 and copper B (CU(B)). The BNC reduces molecular oxygen to 2 water molecules using 4 electrons from cytochrome c in the IMS and 4 protons from the mitochondrial matrix. The polypeptide is Cytochrome c oxidase subunit 2 (MT-CO2) (Pan paniscus (Pygmy chimpanzee)).